The primary structure comprises 412 residues: MWIQQLLGLSSMSIRWPGRSLGSHAWILIAMLQLAVDFPSCDSLGPGPEFRLLSRPQRPQRLWSLRSGPPTRLPTPAWSPRAARAERAHGPIQMQTPRARRAHRPRDQVATLGPKGGLTKPPAATRSSPSLASATASSSIVTAGAAEHQGLLRRGRRHTHDTEFNDFDFRGGRPTTETEFIAWGPTGDEDALESNTFPGGFGPTTVSILQTRKTTVATTTTTTAASTATAMTLQTKGVTESLDPWKRTPVGVSTTEPSTSPSSNGKDIQPPRILGETSGLAVHQIITITVSLIMVIAALITTLVLKNCCAPSGHTRRNSHQRKMNQQEESCQNLTDFTPARVPSSVDIFTAYNETLQCSHECVRASVPVYADETLHSTGEYKSTFNGNRTSSADRHLIPVAFVSEKWFEISC.

Positions 1 to 43 are cleaved as a signal peptide; it reads MWIQQLLGLSSMSIRWPGRSLGSHAWILIAMLQLAVDFPSCDS. The Extracellular portion of the chain corresponds to 44–284; it reads LGPGPEFRLL…GETSGLAVHQ (241 aa). Disordered stretches follow at residues 62–175 and 243–271; these read LWSL…GRPT and DPWKRTPVGVSTTEPSTSPSSNGKDIQPP. A compositionally biased stretch (low complexity) spans 121-146; sequence PPAATRSSPSLASATASSSIVTAGAA. Basic and acidic residues predominate over residues 160–171; the sequence is HDTEFNDFDFRG. Residues 248–263 show a composition bias toward low complexity; the sequence is TPVGVSTTEPSTSPSS. A helical transmembrane segment spans residues 285 to 305; the sequence is IITITVSLIMVIAALITTLVL. Positions 305-412 are targeting signals; sequence LKNCCAPSGH…VSEKWFEISC (108 aa). At 306–412 the chain is on the cytoplasmic side; sequence KNCCAPSGHT…VSEKWFEISC (107 aa).

As to quaternary structure, forms a complex with CDH1 and CTNNB1; interacts directly with CTNNB1. Interacts with AP1M2 and isoform 2 of BSG/CD147.

The protein resides in the basolateral cell membrane. Its subcellular location is the apical cell membrane. The protein localises to the cell junction. It localises to the adherens junction. Plays a role in cell adhesion and cell migration. This chain is Adherens junction-associated protein 1 (Ajap1), found in Mus musculus (Mouse).